Reading from the N-terminus, the 1169-residue chain is Chromosome partition protein Smc (1169 aa).

Pro32–Asn39 provides a ligand contact to ATP. Coiled-coil stretches lie at residues Ile170–Glu507 and Arg659–Leu1030.

It belongs to the SMC family. In terms of assembly, homodimer.

The protein localises to the cytoplasm. Required for chromosome condensation and partitioning. This is Chromosome partition protein Smc from Coxiella burnetii (strain RSA 493 / Nine Mile phase I).